The chain runs to 518 residues: Cell wall biosynthesis protein LcpA (518 aa).

Residues 1–31 (MTEKYRPVRDIKPAPAAMQSTKQAGHPVFRS) are Cytoplasmic-facing. A helical membrane pass occupies residues 32-52 (VVAFVSVLVLLVSGLGYLAVG). Over 53–518 (KVDGVASGNL…AGGDGPRCVN (466 aa)) the chain is Periplasmic. The segment at 485 to 518 (AVTSSTVGQPGADVGEPIESPEFDAGGDGPRCVN) is disordered.

The protein belongs to the LytR/CpsA/Psr (LCP) family. Forms homodimers and homotetramers.

Its subcellular location is the cell inner membrane. Functionally, involved in cell wall biosynthesis. May be responsible for the transfer of arabinogalactan onto peptidoglycan. In vitro, has pyrophosphatase activity. This chain is Cell wall biosynthesis protein LcpA, found in Corynebacterium glutamicum (strain ATCC 13032 / DSM 20300 / JCM 1318 / BCRC 11384 / CCUG 27702 / LMG 3730 / NBRC 12168 / NCIMB 10025 / NRRL B-2784 / 534).